A 356-amino-acid chain; its full sequence is Epoxide hydrolase B (356 aa).

Positions 28 to 129 (PLVVLLHGFP…RCAGVVGISV (102 aa)) constitute an AB hydrolase-1 domain. The Nucleophile role is filled by aspartate 104. Histidine 333 acts as the Proton acceptor in catalysis.

It belongs to the AB hydrolase superfamily. Epoxide hydrolase family. In terms of assembly, homodimer.

It carries out the reaction an epoxide + H2O = an ethanediol. Functionally, could be involved in detoxification of extraneous host-cell epoxides. Catalyzes the hydrolysis of small aromatic epoxide-containing substrates such as trans-1,3-diphenylpropene oxide, trans and cis-stilbene oxide, and terpenoid epoxide. The polypeptide is Epoxide hydrolase B (Mycobacterium tuberculosis (strain CDC 1551 / Oshkosh)).